Reading from the N-terminus, the 337-residue chain is Protein-methionine-sulfoxide reductase catalytic subunit MsrP (337 aa).

Positions 1–54 form a signal peptide, tat-type signal; the sequence is MLIKLPRSSECKASEITPEGIYLSRRTLLGGSLAGLALGALPGGVGAAQMSRYA. Mo-molybdopterin-binding positions include N94, 97 to 98, C152, T187, N237, R242, and 253 to 255; these read YE and SIK.

This sequence belongs to the MsrP family. Heterodimer of a catalytic subunit (MsrP) and a heme-binding subunit (MsrQ). Mo-molybdopterin is required as a cofactor. In terms of processing, predicted to be exported by the Tat system. The position of the signal peptide cleavage has not been experimentally proven.

Its subcellular location is the periplasm. It catalyses the reaction L-methionyl-[protein] + a quinone + H2O = L-methionyl-(S)-S-oxide-[protein] + a quinol. The enzyme catalyses L-methionyl-[protein] + a quinone + H2O = L-methionyl-(R)-S-oxide-[protein] + a quinol. In terms of biological role, part of the MsrPQ system that repairs oxidized periplasmic proteins containing methionine sulfoxide residues (Met-O), using respiratory chain electrons. Thus protects these proteins from oxidative-stress damage caused by reactive species of oxygen and chlorine generated by the host defense mechanisms. MsrPQ is essential for the maintenance of envelope integrity under bleach stress, rescuing a wide series of structurally unrelated periplasmic proteins from methionine oxidation. The catalytic subunit MsrP is non-stereospecific, being able to reduce both (R-) and (S-) diastereoisomers of methionine sulfoxide. The sequence is that of Protein-methionine-sulfoxide reductase catalytic subunit MsrP from Pseudomonas putida (strain ATCC 47054 / DSM 6125 / CFBP 8728 / NCIMB 11950 / KT2440).